We begin with the raw amino-acid sequence, 90 residues long: Small ribosomal subunit protein uS19 (90 aa).

Belongs to the universal ribosomal protein uS19 family.

Functionally, protein S19 forms a complex with S13 that binds strongly to the 16S ribosomal RNA. The chain is Small ribosomal subunit protein uS19 from Mesomycoplasma hyopneumoniae (strain 232) (Mycoplasma hyopneumoniae).